The following is a 401-amino-acid chain: Probable 2,3-bisphosphoglycerate-independent phosphoglycerate mutase (401 aa).

Belongs to the BPG-independent phosphoglycerate mutase family. A-PGAM subfamily.

The enzyme catalyses (2R)-2-phosphoglycerate = (2R)-3-phosphoglycerate. Its pathway is carbohydrate degradation; glycolysis; pyruvate from D-glyceraldehyde 3-phosphate: step 3/5. In terms of biological role, catalyzes the interconversion of 2-phosphoglycerate and 3-phosphoglycerate. This chain is Probable 2,3-bisphosphoglycerate-independent phosphoglycerate mutase, found in Thermotoga neapolitana (strain ATCC 49049 / DSM 4359 / NBRC 107923 / NS-E).